The following is a 799-amino-acid chain: Putative aconitate hydratase, mitochondrial (799 aa).

The N-terminal 32 residues, 1 to 32 (MVRQLVWQRATASRRLAPKCLSPQQLFARRGL), are a transit peptide targeting the mitochondrion. Residues Q108 and 201 to 203 (DSH) contribute to the substrate site. 3 residues coordinate [4Fe-4S] cluster: C399, C462, and C465. Residues R489 and R494 each contribute to the substrate site. Residues 538 to 564 (KFRPPQGSDLPSAGFADGNPALQPSAG) form a disordered region. 685–686 (AR) is a binding site for substrate.

It belongs to the aconitase/IPM isomerase family.

The protein resides in the mitochondrion. In terms of biological role, has no detectable activity towards cis-acontiate or cis-homoaconitate. The polypeptide is Putative aconitate hydratase, mitochondrial (acoB) (Aspergillus fumigatus (strain ATCC MYA-4609 / CBS 101355 / FGSC A1100 / Af293) (Neosartorya fumigata)).